The sequence spans 178 residues: Large ribosomal subunit protein uL6 (178 aa).

It belongs to the universal ribosomal protein uL6 family. In terms of assembly, part of the 50S ribosomal subunit.

Functionally, this protein binds to the 23S rRNA, and is important in its secondary structure. It is located near the subunit interface in the base of the L7/L12 stalk, and near the tRNA binding site of the peptidyltransferase center. The chain is Large ribosomal subunit protein uL6 from Helicobacter pylori (strain P12).